We begin with the raw amino-acid sequence, 638 residues long: Autolysin (638 aa).

The N-terminal stretch at 1–28 is a signal peptide; the sequence is MSLATRRFGAAAALLVAACVLCTAPAWA. A propeptide spans 29–183 (activation peptide); sequence QNETTGTGMV…LKSILKGSQK (155 aa). N-linked (GlcNAc...) asparagine glycosylation is present at asparagine 30. The short motif at 95–102 is the Cysteine switch element; that stretch reads PRCNVPRA. Cysteine 97 is a binding site for Zn(2+). The N-linked (GlcNAc...) asparagine glycan is linked to asparagine 126. A disordered region spans residues 269 to 292; the sequence is VTPPPRPPRPPRPPPRAGSTISSL. Over residues 270 to 284 the composition is skewed to pro residues; that stretch reads TPPPRPPRPPRPPPR. Residue asparagine 296 is glycosylated (N-linked (GlcNAc...) asparagine). Histidine 396 provides a ligand contact to Zn(2+). The active site involves glutamate 397. Zn(2+) is bound by residues histidine 400 and histidine 406. Residues asparagine 458, asparagine 465, asparagine 470, and asparagine 523 are each glycosylated (N-linked (GlcNAc...) asparagine).

The protein belongs to the peptidase M11 family. Zn(2+) serves as cofactor. Post-translationally, present in 2 forms: an inactive V-form in vegetative cells and an active and soluble G-form. The V-form enzyme may be converted to the G-form enzyme during gametic differentiation under nitrogen-starved conditions.

The protein resides in the periplasm. The protein localises to the secreted. It localises to the cell wall. It catalyses the reaction Cleavage of the proline- and hydroxyproline-rich proteins of the Chlamydomonas cell wall. Also cleaves azocasein, gelatin and Leu-Trp-Met-|-Arg-Phe-Ala.. Its function is as follows. Mediates digestion of the cell walls of the 2 mating type gametes during mating as a necessary prelude to cell fusion. This enzyme acts specifically on the framework proteins (inner wall) of the cell wall, cleaving several model peptides at specific sites. The polypeptide is Autolysin (Chlamydomonas reinhardtii (Chlamydomonas smithii)).